A 305-amino-acid polypeptide reads, in one-letter code: ATP synthase gamma chain (305 aa).

This sequence belongs to the ATPase gamma chain family. F-type ATPases have 2 components, CF(1) - the catalytic core - and CF(0) - the membrane proton channel. CF(1) has five subunits: alpha(3), beta(3), gamma(1), delta(1), epsilon(1). CF(0) has three main subunits: a, b and c.

It is found in the cell membrane. Its function is as follows. Produces ATP from ADP in the presence of a proton gradient across the membrane. The gamma chain is believed to be important in regulating ATPase activity and the flow of protons through the CF(0) complex. In Streptomyces griseus subsp. griseus (strain JCM 4626 / CBS 651.72 / NBRC 13350 / KCC S-0626 / ISP 5235), this protein is ATP synthase gamma chain.